The following is a 176-amino-acid chain: NAD(P)H-quinone oxidoreductase subunit 6, chloroplastic (176 aa).

5 consecutive transmembrane segments (helical) span residues 10–30 (FLLV…VLLA), 32–52 (PIYS…FYIL), 61–81 (AQLL…VMFI), 92–112 (LWTV…VSLI), and 152–172 (FFIP…GAIA).

It belongs to the complex I subunit 6 family. In terms of assembly, NDH is composed of at least 16 different subunits, 5 of which are encoded in the nucleus.

Its subcellular location is the plastid. The protein localises to the chloroplast thylakoid membrane. It catalyses the reaction a plastoquinone + NADH + (n+1) H(+)(in) = a plastoquinol + NAD(+) + n H(+)(out). The enzyme catalyses a plastoquinone + NADPH + (n+1) H(+)(in) = a plastoquinol + NADP(+) + n H(+)(out). Its function is as follows. NDH shuttles electrons from NAD(P)H:plastoquinone, via FMN and iron-sulfur (Fe-S) centers, to quinones in the photosynthetic chain and possibly in a chloroplast respiratory chain. The immediate electron acceptor for the enzyme in this species is believed to be plastoquinone. Couples the redox reaction to proton translocation, and thus conserves the redox energy in a proton gradient. The chain is NAD(P)H-quinone oxidoreductase subunit 6, chloroplastic (ndhG) from Helianthus annuus (Common sunflower).